The following is a 589-amino-acid chain: Vomeromodulin (589 aa).

An N-terminal signal peptide occupies residues 1-29 (MWVLQALAIMLSIQAGVLDLVEVPPVVRS). Disordered stretches follow at residues 49-71 (GLNDPAKNRMLPPKRPGAPSRGG) and 146-170 (LLGKEGNEDPSKPSSGSKATGGLGQ). 2 N-linked (GlcNAc...) asparagine glycosylation sites follow: Asn419 and Asn437.

N-glycosylated. The N-glycans consist mainly of complex sialylated and fucosylated biantennary structures. As to expression, abundant in the lateral nasal glands. Also present in the posterior septal and vomeronasal glands.

It localises to the secreted. This chain is Vomeromodulin, found in Rattus norvegicus (Rat).